Here is a 282-residue protein sequence, read N- to C-terminus: Tyrosine recombinase XerA (282 aa).

The region spanning 2 to 79 is the Core-binding (CB) domain; that stretch reads SEPNEVIEEF…ALRAYFRFEG (78 aa). The 177-residue stretch at 95 to 271 folds into the Tyr recombinase domain; sequence SLPKALTREE…TVEHLRKAQE (177 aa). Residues arginine 132, lysine 157, histidine 223, arginine 226, and histidine 249 contribute to the active site. Tyrosine 258 serves as the catalytic O-(3'-phospho-DNA)-tyrosine intermediate.

It belongs to the 'phage' integrase family. XerA subfamily.

It is found in the cytoplasm. Functionally, site-specific tyrosine recombinase, which acts by catalyzing the cutting and rejoining of the recombining DNA molecules. The chain is Tyrosine recombinase XerA from Thermococcus kodakarensis (strain ATCC BAA-918 / JCM 12380 / KOD1) (Pyrococcus kodakaraensis (strain KOD1)).